Here is a 57-residue protein sequence, read N- to C-terminus: DNA gyrase inhibitor YacG (57 aa).

C10, C13, C25, and C29 together coordinate Zn(2+).

The protein belongs to the DNA gyrase inhibitor YacG family. Interacts with GyrB. Requires Zn(2+) as cofactor.

Inhibits all the catalytic activities of DNA gyrase by preventing its interaction with DNA. Acts by binding directly to the C-terminal domain of GyrB, which probably disrupts DNA binding by the gyrase. This chain is DNA gyrase inhibitor YacG, found in Brucella abortus (strain 2308).